The primary structure comprises 274 residues: Dermonecrotic toxin LarSicTox-alphaIV1 (274 aa).

Residue histidine 5 is part of the active site. Mg(2+) contacts are provided by glutamate 25 and aspartate 27. Catalysis depends on histidine 41, which acts as the Nucleophile. 2 disulfides stabilise this stretch: cysteine 45–cysteine 51 and cysteine 47–cysteine 192. A Mg(2+)-binding site is contributed by aspartate 85.

It belongs to the arthropod phospholipase D family. Class II subfamily. Mg(2+) serves as cofactor. Expressed by the venom gland.

It is found in the secreted. It catalyses the reaction an N-(acyl)-sphingosylphosphocholine = an N-(acyl)-sphingosyl-1,3-cyclic phosphate + choline. It carries out the reaction an N-(acyl)-sphingosylphosphoethanolamine = an N-(acyl)-sphingosyl-1,3-cyclic phosphate + ethanolamine. The catalysed reaction is a 1-acyl-sn-glycero-3-phosphocholine = a 1-acyl-sn-glycero-2,3-cyclic phosphate + choline. The enzyme catalyses a 1-acyl-sn-glycero-3-phosphoethanolamine = a 1-acyl-sn-glycero-2,3-cyclic phosphate + ethanolamine. Dermonecrotic toxins cleave the phosphodiester linkage between the phosphate and headgroup of certain phospholipids (sphingolipid and lysolipid substrates), forming an alcohol (often choline) and a cyclic phosphate. This toxin acts on sphingomyelin (SM). It may also act on ceramide phosphoethanolamine (CPE), lysophosphatidylcholine (LPC) and lysophosphatidylethanolamine (LPE), but not on lysophosphatidylserine (LPS), and lysophosphatidylglycerol (LPG). It acts by transphosphatidylation, releasing exclusively cyclic phosphate products as second products. Induces dermonecrosis, hemolysis, increased vascular permeability, edema, inflammatory response, and platelet aggregation. This Loxosceles arizonica (Arizona brown spider) protein is Dermonecrotic toxin LarSicTox-alphaIV1.